We begin with the raw amino-acid sequence, 90 residues long: Probable Fe(2+)-trafficking protein (90 aa).

It belongs to the Fe(2+)-trafficking protein family.

Could be a mediator in iron transactions between iron acquisition and iron-requiring processes, such as synthesis and/or repair of Fe-S clusters in biosynthetic enzymes. The polypeptide is Probable Fe(2+)-trafficking protein (Idiomarina loihiensis (strain ATCC BAA-735 / DSM 15497 / L2-TR)).